Consider the following 317-residue polypeptide: COP9 signalosome complex subunit 6a (317 aa).

In terms of domain architecture, MPN spans 30–164 (TQLNPPASIC…VTIYESELHV (135 aa)).

This sequence belongs to the peptidase M67A family. CSN6 subfamily. Component of the CSN complex, probably composed of CSN1, CSN2, CSN3, CSN4, CSN5 (CSN5A or CSN5B), CSN6 (CSN6A or CSN6B), CSN7 and CSN8. Interacts with itself. In the complex, it probably interacts directly with CSN4 and CSN5A or CSN5B. Interacts with CSN7 (via C-terminal tail). Binds to the translation initiation factors TIF3E1.

It localises to the cytoplasm. The protein resides in the nucleus. Functionally, component of the COP9 signalosome complex (CSN), a complex involved in various cellular and developmental processes such as photomorphogenesis and auxin and jasmonate responses. The CSN complex is an essential regulator of the ubiquitin (Ubl) conjugation pathway by mediating the deneddylation of the cullin subunits of SCF-type E3 ligase complexes, leading to decrease the Ubl ligase activity of SCF. It is involved in repression of photomorphogenesis in darkness by regulating the activity of COP1-containing Ubl ligase complexes. The complex is also required for degradation of PSIAA6 by regulating the activity of the Ubl ligase SCF-TIR complex. Essential for the structural integrity of the CSN holocomplex. This is COP9 signalosome complex subunit 6a from Arabidopsis thaliana (Mouse-ear cress).